Reading from the N-terminus, the 383-residue chain is Ceramide synthase 3 (383 aa).

The helical transmembrane segment at 32–52 threads the bilayer; it reads VFVKPSHLYVTIPYAFLLLII. The tract at residues 66 to 127 is homeobox-like; it reads KSFGIKETVR…RSRRNQERPS (62 aa). Residues 130 to 331 enclose the TLC domain; that stretch reads KKFQEACWRF…ILKMLNRCIF (202 aa). Transmembrane regions (helical) follow at residues 139–159, 174–194, 205–225, 264–284, and 298–318; these read FAFY…KPWL, LLPS…SLLF, FLAH…SWCA, FFIF…FWIL, and FFSY…HLYW. Topologically, residues 319–383 are cytoplasmic; the sequence is GYYILKMLNR…HLIPNGQHGH (65 aa). Ser340 carries the post-translational modification Phosphoserine. The segment covering 342 to 355 has biased composition (acidic residues); it reads DEDYEEEEEEEEEE. Positions 342–363 are disordered; the sequence is DEDYEEEEEEEEEEATKGKEMD.

Expressed in the epidermis, where it localizes at the interface between the stratum granulosum and the stratum corneum (at protein level).

The protein resides in the endoplasmic reticulum membrane. The catalysed reaction is a very long-chain fatty acyl-CoA + a sphingoid base = an N-(very-long-chain fatty acyl)-sphingoid base + CoA + H(+). It catalyses the reaction docosanoyl-CoA + sphinganine = N-docosanoylsphinganine + CoA + H(+). It carries out the reaction tetracosanoyl-CoA + sphinganine = N-tetracosanoylsphinganine + CoA + H(+). The enzyme catalyses hexacosanoyl-CoA + sphinganine = N-hexacosanoylsphinganine + CoA + H(+). The catalysed reaction is 2-hydroxydocosanoyl-CoA + sphinganine = N-(2-hydroxydocosanoyl)-sphinganine + CoA + H(+). It catalyses the reaction 2-hydroxytetracosanoyl-CoA + sphinganine = N-(2-hydroxytetracosanoyl)-sphinganine + CoA + H(+). It carries out the reaction an ultra-long-chain fatty acyl-CoA + a sphingoid base = an N-(ultra-long-chain-acyl)-sphingoid base + CoA + H(+). The enzyme catalyses octacosanoyl-CoA + sphinganine = N-(octacosanoyl)-sphinganine + CoA + H(+). The catalysed reaction is a fatty acyl-CoA + sphing-4-enine = an N-acylsphing-4-enine + CoA + H(+). It catalyses the reaction sphinganine + octadecanoyl-CoA = N-(octadecanoyl)-sphinganine + CoA + H(+). It carries out the reaction 2-hydroxyoctadecanoyl-CoA + sphinganine = N-(2-hydroxyoctadecanoyl)-sphinganine + CoA + H(+). It participates in lipid metabolism; sphingolipid metabolism. Functionally, ceramide synthase that catalyzes the transfer of the acyl chain from acyl-CoA to a sphingoid base, with high selectivity toward very- and ultra-long-chain fatty acyl-CoA (chain length greater than C22). N-acylates sphinganine and sphingosine bases to form dihydroceramides and ceramides in de novo synthesis and salvage pathways, respectively. It is crucial for the synthesis of ultra-long-chain ceramides in the epidermis, to maintain epidermal lipid homeostasis and terminal differentiation. The sequence is that of Ceramide synthase 3 from Homo sapiens (Human).